A 2364-amino-acid chain; its full sequence is Actin-binding protein F (2364 aa).

Residues 138-157 (THQTSPTTETTTTPSSSSSS) are compositionally biased toward low complexity. 4 disordered regions span residues 138-168 (THQT…STLD), 1087-1111 (QASK…EKRR), 1412-1435 (NNNS…RAPM), and 1929-2088 (KLIS…SEFN). The segment covering 1092 to 1111 (NESEVKDEKSMRNRQVEKRR) has biased composition (basic and acidic residues). Composition is skewed to low complexity over residues 1412–1428 (NNNS…NSFG) and 1932–1960 (SSST…TTTD). A coiled-coil region spans residues 1960–2017 (DSSKDKKKLEKEEKQREKERKQKEKEDKKREKEELKKKEKEEKKKKEEEKKLKKKSGS). A compositionally biased stretch (basic and acidic residues) spans 1961-2010 (SSKDKKKLEKEEKQREKERKQKEKEDKKREKEELKKKEKEEKKKKEEEKK). The segment covering 2027 to 2047 (ATPTTTTTTEATTTTTTTTAT) has biased composition (low complexity). Positions 2052-2070 (IKPEKIASDDEHDDHHHDE) are enriched in basic and acidic residues. Over residues 2071 to 2081 (HDEEDDDDEPL) the composition is skewed to acidic residues. The stretch at 2129–2173 (VQRWNSLFKDLRNKVDQVSNKDSVEIDYEKEIDRERRQNKMASNE) forms a coiled coil.

As to quaternary structure, interacts with actin.

It is found in the nucleus. It localises to the cytoplasm. The protein resides in the cytoskeleton. The protein is Actin-binding protein F (abpF) of Dictyostelium discoideum (Social amoeba).